The primary structure comprises 322 residues: Homoserine kinase (322 aa).

106-116 (ALSSGMGGSAA) lines the ATP pocket.

Belongs to the GHMP kinase family. Homoserine kinase subfamily.

It localises to the cytoplasm. The catalysed reaction is L-homoserine + ATP = O-phospho-L-homoserine + ADP + H(+). It participates in amino-acid biosynthesis; L-threonine biosynthesis; L-threonine from L-aspartate: step 4/5. In terms of biological role, catalyzes the ATP-dependent phosphorylation of L-homoserine to L-homoserine phosphate. The protein is Homoserine kinase of Xanthomonas campestris pv. campestris (strain B100).